Consider the following 647-residue polypeptide: Knirps-related protein (647 aa).

The segment at residues 11–87 is a DNA-binding region (nuclear receptor); the sequence is NQTCKVCGEP…VGMSKSGSRY (77 aa). NR C4-type zinc fingers lie at residues 14–34 and 51–75; these read CKVC…CEGC and CKNN…LKKC. 4 disordered regions span residues 111 to 142, 196 to 274, 340 to 383, and 402 to 600; these read MAAH…KGMS, HKHP…LSPF, GAGQ…LLTN, and SQQQ…NSIL. Residues 120–134 show a composition bias toward gly residues; sequence AGGGSSGGSGGGQGM. 2 stretches are compositionally biased toward low complexity: residues 200-223 and 232-247; these read VVAS…VSSV and GGKS…ADGS. Residues 248-260 show a composition bias toward gly residues; sequence HSGGGGGGGGGVT. 2 stretches are compositionally biased toward polar residues: residues 370–381 and 420–432; these read SPSTHANNNHLL and DYSI…PNSE. 2 stretches are compositionally biased toward basic and acidic residues: residues 433 to 443 and 480 to 491; these read SGRERVKSRQN and QEERTPAGEDPR. Over residues 502–519 the composition is skewed to low complexity; it reads LSMKTTGSSLSSKSSSPE. The segment covering 520 to 541 has biased composition (acidic residues); sequence IEPETEISSDVEKNDTDDDDED. A compositionally biased stretch (basic and acidic residues) spans 542–556; sequence LKVTPEEEISVRETA. Positions 567–579 are enriched in polar residues; it reads TTETAKTSIENTH. The span at 580-599 shows a compositional bias: low complexity; it reads NNNNSISNNNNNNNNNNNSI.

It belongs to the nuclear hormone receptor family. NR0 subfamily.

Its subcellular location is the nucleus. The polypeptide is Knirps-related protein (knrl) (Drosophila melanogaster (Fruit fly)).